The chain runs to 124 residues: Small ribosomal subunit protein eS25 (124 aa).

Residues 1-22 (PPKDDKKKKDAGKSAKKDKDPV) show a composition bias toward basic and acidic residues. Residues 1 to 37 (PPKDDKKKKDAGKSAKKDKDPVNKSGGKAKKKKWSKG) form a disordered region. The segment covering 27-37 (GKAKKKKWSKG) has biased composition (basic residues). K42 is subject to N6-acetyllysine. Residue K51 is modified to N6-acetyllysine; alternate. At K51 the chain carries N6-succinyllysine; alternate. Residues K59 and K65 each carry the N6-acetyllysine modification. Position 93 is an N6-acetyllysine; alternate (K93). N6-succinyllysine; alternate is present on K93.

Belongs to the eukaryotic ribosomal protein eS25 family. As to quaternary structure, component of the small ribosomal subunit.

Its subcellular location is the cytoplasm. Component of the small ribosomal subunit. The ribosome is a large ribonucleoprotein complex responsible for the synthesis of proteins in the cell. The polypeptide is Small ribosomal subunit protein eS25 (RPS25) (Oryctolagus cuniculus (Rabbit)).